The primary structure comprises 159 residues: uncharacterized protein (159 aa).

The 61-residue stretch at 6-66 (LSKKDWEIIK…YLRFDKLGYT (61 aa)) folds into the HTH asnC-type domain. Positions 25 to 44 (DAEIGRRIGLSKSAVRWRRI) form a DNA-binding region, H-T-H motif.

This is an uncharacterized protein from Pyrococcus horikoshii (strain ATCC 700860 / DSM 12428 / JCM 9974 / NBRC 100139 / OT-3).